A 356-amino-acid chain; its full sequence is Probable dual-specificity RNA methyltransferase RlmN (356 aa).

Glutamate 100 serves as the catalytic Proton acceptor. The region spanning 106–340 is the Radical SAM core domain; sequence TNSRLTTCVS…VSLRASRGLD (235 aa). Cysteine 113 and cysteine 345 are disulfide-bonded. [4Fe-4S] cluster is bound by residues cysteine 120, cysteine 124, and cysteine 127. S-adenosyl-L-methionine is bound by residues 167–168, serine 197, 226–228, and asparagine 302; these read GE and SLH. The active-site S-methylcysteine intermediate is cysteine 345.

Belongs to the radical SAM superfamily. RlmN family. Requires [4Fe-4S] cluster as cofactor.

Its subcellular location is the cytoplasm. It catalyses the reaction adenosine(2503) in 23S rRNA + 2 reduced [2Fe-2S]-[ferredoxin] + 2 S-adenosyl-L-methionine = 2-methyladenosine(2503) in 23S rRNA + 5'-deoxyadenosine + L-methionine + 2 oxidized [2Fe-2S]-[ferredoxin] + S-adenosyl-L-homocysteine. The catalysed reaction is adenosine(37) in tRNA + 2 reduced [2Fe-2S]-[ferredoxin] + 2 S-adenosyl-L-methionine = 2-methyladenosine(37) in tRNA + 5'-deoxyadenosine + L-methionine + 2 oxidized [2Fe-2S]-[ferredoxin] + S-adenosyl-L-homocysteine. Specifically methylates position 2 of adenine 2503 in 23S rRNA and position 2 of adenine 37 in tRNAs. The protein is Probable dual-specificity RNA methyltransferase RlmN of Prochlorococcus marinus (strain MIT 9211).